Reading from the N-terminus, the 456-residue chain is Armadillo repeat-containing X-linked protein 1 (456 aa).

Over 1-6 the chain is Mitochondrial intermembrane; it reads MGRTRE. Mitochondrion outer membrane (MOM)-targeting sequence regions lie at residues 1-6 and 26-36; these read MGRTRE and RLTWGKDENEK. A helical; Signal-anchor transmembrane segment spans residues 7–29; the sequence is AGCVAAGMVIGAGACYCVYRLTW. Topologically, residues 30 to 456 are cytoplasmic; sequence GKDENEKLWD…VKVLKVLTKL (427 aa). Disordered stretches follow at residues 37-106 and 139-186; these read LWDE…SGGG and RTLT…APAT. Residues 38-50 show a composition bias toward acidic residues; the sequence is WDEEEEEEEEEEE. Basic and acidic residues-rich tracts occupy residues 51-62 and 72-81; these read KSCSDKTEKELK and KPQDDSKSKV. Over residues 162-180 the composition is skewed to basic residues; it reads SRARNRTSGKVKRKNRSKS. ARM repeat units follow at residues 198–238, 240–279, 361–401, and 418–456; these read PYKI…NNAA, SFNQNAIRELGGVPIIAKLIKTRDPIIREKTYNALNNLSV, PAMT…NIND, and SSLFFLFKESGVCVKKIKALASHKDLVVKVKVLKVLTKL.

It belongs to the eutherian X-chromosome-specific Armcx family. Interacts with MIRO1. As to expression, widely expressed in the adult nervous tissue, especially in the forebrain, including the cerebral cortex, hippocampus and thalamus.

Its subcellular location is the mitochondrion. The protein localises to the mitochondrion outer membrane. Functionally, regulates mitochondrial transport during axon regeneration. Increases the proportion of motile mitochondria by recruiting stationary mitochondria into the motile pool. Enhances mitochondria movement and neurite growth in both adult axons and embryonic neurons. Promotes neuronal survival and axon regeneration after nerve injury. May link mitochondria to the Trak1-kinesin motor complex via its interaction with Miro1. The polypeptide is Armadillo repeat-containing X-linked protein 1 (Armcx1) (Mus musculus (Mouse)).